Here is a 188-residue protein sequence, read N- to C-terminus: Molybdopterin synthase catalytic subunit (188 aa).

Residues 1 to 10 show a composition bias toward polar residues; sequence MSTSETSSYT. Residues 1–21 form a disordered region; sequence MSTSETSSYTPDIPSEPVTKT. Substrate is bound by residues 123 to 124, lysine 139, and 146 to 148; these read HR and KLE.

The protein belongs to the MoaE family. MOCS2B subfamily. Heterotetramer; composed of 2 small (MOCS2A) and 2 large (MOCS2B) subunits.

Its subcellular location is the cytoplasm. The enzyme catalyses 2 [molybdopterin-synthase sulfur-carrier protein]-C-terminal-Gly-aminoethanethioate + cyclic pyranopterin phosphate + H2O = molybdopterin + 2 [molybdopterin-synthase sulfur-carrier protein]-C-terminal Gly-Gly + 2 H(+). It participates in cofactor biosynthesis; molybdopterin biosynthesis. Its function is as follows. Catalytic subunit of the molybdopterin synthase complex, a complex that catalyzes the conversion of precursor Z into molybdopterin. Acts by mediating the incorporation of 2 sulfur atoms from thiocarboxylated MOCS2A into precursor Z to generate a dithiolene group. In Phaeosphaeria nodorum (strain SN15 / ATCC MYA-4574 / FGSC 10173) (Glume blotch fungus), this protein is Molybdopterin synthase catalytic subunit.